The sequence spans 126 residues: C-type natriuretic peptide (126 aa).

A signal peptide spans 1–23; that stretch reads MHLSQLLACALLLTLLSLRPSEA. Positions 19–72 are disordered; that stretch reads RPSEAKPGAPPKVPRTPPGEEVAEPQAAGGGQKKGDKTPGGGGANLKGDRSRLL. Residues 24–73 constitute a propeptide that is removed on maturation; that stretch reads KPGAPPKVPRTPPGEEVAEPQAAGGGQKKGDKTPGGGGANLKGDRSRLLR. The segment covering 26–35 has biased composition (pro residues); that stretch reads GAPPKVPRTP. Over residues 46 to 63 the composition is skewed to gly residues; that stretch reads AGGGQKKGDKTPGGGGAN. Cysteines 110 and 126 form a disulfide.

Belongs to the natriuretic peptide family. In terms of processing, degraded by IDE (in vitro).

The protein localises to the secreted. Hormone which plays a role in endochondral ossification through regulation of cartilaginous growth plate chondrocytes proliferation and differentiation. May also be vasoactive and natriuretic. Acts by specifically binding and stimulating NPR2 to produce cGMP. Binds the clearance receptor NPR3. The sequence is that of C-type natriuretic peptide (NPPC) from Sus scrofa (Pig).